A 39-amino-acid chain; its full sequence is Cytochrome b559 subunit beta (39 aa).

The chain crosses the membrane as a helical span at residues 14 to 30; that stretch reads WLAVHGLAVPTVFFLGS. Position 18 (H18) interacts with heme.

This sequence belongs to the PsbE/PsbF family. As to quaternary structure, heterodimer of an alpha subunit and a beta subunit. PSII is composed of 1 copy each of membrane proteins PsbA, PsbB, PsbC, PsbD, PsbE, PsbF, PsbH, PsbI, PsbJ, PsbK, PsbL, PsbM, PsbT, PsbX, PsbY, PsbZ, Psb30/Ycf12, at least 3 peripheral proteins of the oxygen-evolving complex and a large number of cofactors. It forms dimeric complexes. It depends on heme b as a cofactor.

It is found in the plastid. It localises to the chloroplast thylakoid membrane. This b-type cytochrome is tightly associated with the reaction center of photosystem II (PSII). PSII is a light-driven water:plastoquinone oxidoreductase that uses light energy to abstract electrons from H(2)O, generating O(2) and a proton gradient subsequently used for ATP formation. It consists of a core antenna complex that captures photons, and an electron transfer chain that converts photonic excitation into a charge separation. The sequence is that of Cytochrome b559 subunit beta from Cedrus deodara (Deodar cedar).